The sequence spans 114 residues: Putative neurotoxin 7 (114 aa).

This sequence belongs to the scolopendra neurotoxin 8 family. Contains 3 disulfide bonds. Expressed by the venom gland.

It localises to the secreted. This Scolopendra mutilans (Chinese red-headed centipede) protein is Putative neurotoxin 7.